The sequence spans 101 residues: Large ribosomal subunit protein uL23 (101 aa).

It belongs to the universal ribosomal protein uL23 family. In terms of assembly, part of the 50S ribosomal subunit. Contacts protein L29, and trigger factor when it is bound to the ribosome.

One of the early assembly proteins it binds 23S rRNA. One of the proteins that surrounds the polypeptide exit tunnel on the outside of the ribosome. Forms the main docking site for trigger factor binding to the ribosome. The sequence is that of Large ribosomal subunit protein uL23 from Thiobacillus denitrificans (strain ATCC 25259 / T1).